The sequence spans 612 residues: Sorting nexin MVP1 (612 aa).

Residues 35–68 (SSAPSPAGSVTPARATASASEGRNIAANGNKEEG) are disordered. The PX domain maps to 226-334 (WKDQERIVVT…NIFLTSSSFE (109 aa)). A 1,2-diacyl-sn-glycero-3-phospho-(1D-myo-inositol-3-phosphate)-binding residues include Arg263, Ser265, Lys289, and Arg301.

It belongs to the sorting nexin family.

It is found in the cytoplasm. Its subcellular location is the membrane. Required for vacuolar protein sorting. The polypeptide is Sorting nexin MVP1 (MVP1) (Cryptococcus neoformans var. neoformans serotype D (strain B-3501A) (Filobasidiella neoformans)).